The following is a 316-amino-acid chain: Protein C4 (316 aa).

The protein belongs to the poxviridae OPG031 protein family.

The protein localises to the host cytoplasm. It localises to the host nucleus. Plays a role in the inhibition of host NF-kappa-B activation. Mechanistically, blocks the subunit p65/RELA translocation into the host nucleus. This Vaccinia virus (strain Western Reserve) (VACV) protein is Protein C4 (OPG031).